A 458-amino-acid chain; its full sequence is UDP-N-acetylmuramate--L-alanine ligase (458 aa).

G119–T125 contacts ATP.

This sequence belongs to the MurCDEF family.

The protein localises to the cytoplasm. The catalysed reaction is UDP-N-acetyl-alpha-D-muramate + L-alanine + ATP = UDP-N-acetyl-alpha-D-muramoyl-L-alanine + ADP + phosphate + H(+). Its pathway is cell wall biogenesis; peptidoglycan biosynthesis. In terms of biological role, cell wall formation. This chain is UDP-N-acetylmuramate--L-alanine ligase, found in Phocaeicola vulgatus (strain ATCC 8482 / DSM 1447 / JCM 5826 / CCUG 4940 / NBRC 14291 / NCTC 11154) (Bacteroides vulgatus).